The chain runs to 131 residues: Small ribosomal subunit protein eS17 (131 aa).

Belongs to the eukaryotic ribosomal protein eS17 family.

The polypeptide is Small ribosomal subunit protein eS17 (RPS17) (Theileria annulata).